Consider the following 122-residue polypeptide: Phycocyanin PC645 alpha-2 subunit (122 aa).

Positions 54 and 68 each coordinate (2R,3E)-phycocyanobilin. Mesobiliverdin-binding residues include C70, K76, E77, and C92.

This sequence belongs to the phycoerythrin family. As to quaternary structure, heterotetramer of 2 different alpha chains and 2 identical beta chains which form 2 alpha-beta heterodimers within the heterotetramer. Contains two phycocyanobilin chromophores and one mesobiliverdin chromophore with binding mediated by both the alpha and beta subunits.

Its subcellular location is the plastid. It localises to the chloroplast thylakoid membrane. In terms of biological role, light-harvesting photosynthetic tetrapyrrole chromophore-protein from the phycobiliprotein complex. In Chroomonas sp. (strain CCMP270), this protein is Phycocyanin PC645 alpha-2 subunit.